A 116-amino-acid polypeptide reads, in one-letter code: MLSCRLQCALAALCIVLALGGVTGAPSDPRLRQFLQKSLAAATGKQELAKYFLAELLSEPNQTENDALEPEDLPQAAEQDEMRLELQRSANSNPAMAPRERKAGCKNFFWKTFTSC.

A signal peptide spans 1-24 (MLSCRLQCALAALCIVLALGGVTG). Residues 35 to 88 (LQKSLAAATGKQELAKYFLAELLSEPNQTENDALEPEDLPQAAEQDEMRLELQR) constitute a propeptide that is removed on maturation. A Threonine amide modification is found at Thr-43. Cys-105 and Cys-116 form a disulfide bridge.

It belongs to the somatostatin family. In terms of processing, C-terminal amidation of the neuronostatin peptide is required for its biological activity, including for the regulation of mean arterial pressure. In terms of tissue distribution, in the pancreas, somatostatin is expressed in delta cells of the islets of Langerhans. In the stomach, it is expressed in parietal cells of oxyntic mucosa and in the small intestine, it is found in the villus (at protein level). Neuronostatin is expressed in the pancreas in delta cells of the islets of Langerhans, as well as in the stomach, in parietal cells of oxyntic mucosa and in the small intestine, in the villus (at protein level).

Its subcellular location is the secreted. Inhibits the secretion of pituitary hormones, including that of growth hormone/somatotropin (GH1), PRL, ACTH, luteinizing hormone (LH) and TSH. Also impairs ghrelin- and GnRH-stimulated secretion of GH1 and LH; the inhibition of ghrelin-stimulated secretion of GH1 can be further increased by neuronostatin. Its function is as follows. May enhance low-glucose-induced glucagon release by pancreatic alpha cells. This effect may be mediated by binding to GPR107 and PKA activation. May regulate cardiac contractile function. May compromise cardiomyocyte viability. In the central nervous system, may impair memory retention and may affect hippocampal excitability. May also have anxiolytic and anorexigenic effects. May play a role in arterial pressure regulation. May inhibit basal, but not ghrelin- or GnRH-stimulated secretion of GH1 or LH, but does not affect the release of other pituitary hormones, including PRL, ACTH, FSH or TSH. Potentiates inhibitory action of somatostatin on ghrelin-stimulated secretion of GH1, but not that on GnRH-stimulated secretion of LH. This chain is Somatostatin (Sst), found in Mus musculus (Mouse).